The primary structure comprises 450 residues: Na(+)/H(+) antiporter NhaA 2 (450 aa).

A run of 12 helical transmembrane segments spans residues 43 to 63 (VGGA…NSPW), 86 to 106 (LTLG…VVGL), 124 to 144 (ALPM…FVAV), 155 to 175 (GWAI…AVIS), 185 to 205 (FLLT…AVFY), 208 to 228 (EINL…ALCV), 234 to 254 (SWWL…ESGV), 258 to 278 (VAGV…AGGP), 299 to 319 (VAVP…VSGL), 326 to 346 (PITL…IFLT), 364 to 384 (WIDV…SLLI), and 398 to 418 (FVKV…AVLL).

This sequence belongs to the NhaA Na(+)/H(+) (TC 2.A.33) antiporter family.

It localises to the cell membrane. The enzyme catalyses Na(+)(in) + 2 H(+)(out) = Na(+)(out) + 2 H(+)(in). In terms of biological role, na(+)/H(+) antiporter that extrudes sodium in exchange for external protons. The chain is Na(+)/H(+) antiporter NhaA 2 from Mycobacterium sp. (strain KMS).